The sequence spans 37 residues: Large ribosomal subunit protein bL36 (37 aa).

This sequence belongs to the bacterial ribosomal protein bL36 family.

This chain is Large ribosomal subunit protein bL36, found in Staphylococcus carnosus (strain TM300).